A 189-amino-acid chain; its full sequence is UPF0301 protein PFLU_5755 (189 aa).

The protein belongs to the UPF0301 (AlgH) family.

The chain is UPF0301 protein PFLU_5755 from Pseudomonas fluorescens (strain SBW25).